The primary structure comprises 232 residues: Endonuclease V (232 aa).

Mg(2+)-binding residues include Asp43 and Asp109.

This sequence belongs to the endonuclease V family. The cofactor is Mg(2+).

The protein resides in the cytoplasm. The enzyme catalyses Endonucleolytic cleavage at apurinic or apyrimidinic sites to products with a 5'-phosphate.. Its function is as follows. DNA repair enzyme involved in the repair of deaminated bases. Selectively cleaves double-stranded DNA at the second phosphodiester bond 3' to a deoxyinosine leaving behind the intact lesion on the nicked DNA. In Thermofilum pendens (strain DSM 2475 / Hrk 5), this protein is Endonuclease V.